We begin with the raw amino-acid sequence, 293 residues long: Small ribosomal subunit biogenesis GTPase RsgA 2 (293 aa).

Residues 63 to 223 (SNELVRPPIA…VADTPGFSVL (161 aa)) form the CP-type G domain. GTP is bound by residues 112–115 (TKVD) and 166–174 (GQSGVGKSS). Cys-247, Cys-252, His-254, and Cys-260 together coordinate Zn(2+).

Belongs to the TRAFAC class YlqF/YawG GTPase family. RsgA subfamily. Monomer. Associates with 30S ribosomal subunit, binds 16S rRNA. It depends on Zn(2+) as a cofactor.

Its subcellular location is the cytoplasm. Functionally, one of several proteins that assist in the late maturation steps of the functional core of the 30S ribosomal subunit. Helps release RbfA from mature subunits. May play a role in the assembly of ribosomal proteins into the subunit. Circularly permuted GTPase that catalyzes slow GTP hydrolysis, GTPase activity is stimulated by the 30S ribosomal subunit. The protein is Small ribosomal subunit biogenesis GTPase RsgA 2 of Oceanobacillus iheyensis (strain DSM 14371 / CIP 107618 / JCM 11309 / KCTC 3954 / HTE831).